The following is a 230-amino-acid chain: 7-cyano-7-deazaguanine synthase (230 aa).

16-26 (LSGGLDSMVSG) contributes to the ATP binding site. 4 residues coordinate Zn(2+): Cys195, Cys205, Cys208, and Cys211.

The protein belongs to the QueC family. Requires Zn(2+) as cofactor.

It carries out the reaction 7-carboxy-7-deazaguanine + NH4(+) + ATP = 7-cyano-7-deazaguanine + ADP + phosphate + H2O + H(+). It participates in purine metabolism; 7-cyano-7-deazaguanine biosynthesis. Its function is as follows. Catalyzes the ATP-dependent conversion of 7-carboxy-7-deazaguanine (CDG) to 7-cyano-7-deazaguanine (preQ(0)). This is 7-cyano-7-deazaguanine synthase from Rhizorhabdus wittichii (strain DSM 6014 / CCUG 31198 / JCM 15750 / NBRC 105917 / EY 4224 / RW1) (Sphingomonas wittichii).